Consider the following 209-residue polypeptide: Guanylate kinase (209 aa).

In terms of domain architecture, Guanylate kinase-like spans 9-188; sequence GIMLVISSPS…SVHQIKCIFT (180 aa). Residue 16 to 23 participates in ATP binding; that stretch reads SPSGGGKT.

It belongs to the guanylate kinase family.

The protein resides in the cytoplasm. The catalysed reaction is GMP + ATP = GDP + ADP. Functionally, essential for recycling GMP and indirectly, cGMP. This is Guanylate kinase from Ehrlichia canis (strain Jake).